Reading from the N-terminus, the 335-residue chain is Fructose-1,6-bisphosphatase class 1 (335 aa).

4 residues coordinate Mg(2+): E93, D117, L119, and D120. Residues 120-123 (DGSS), N213, Y244, and K274 contribute to the substrate site. Mg(2+) is bound at residue E280.

Belongs to the FBPase class 1 family. In terms of assembly, homotetramer. Mg(2+) serves as cofactor.

It localises to the cytoplasm. It catalyses the reaction beta-D-fructose 1,6-bisphosphate + H2O = beta-D-fructose 6-phosphate + phosphate. It functions in the pathway carbohydrate biosynthesis; gluconeogenesis. This Flavobacterium psychrophilum (strain ATCC 49511 / DSM 21280 / CIP 103535 / JIP02/86) protein is Fructose-1,6-bisphosphatase class 1.